The primary structure comprises 456 residues: Asparagine--tRNA ligase (456 aa).

Belongs to the class-II aminoacyl-tRNA synthetase family. As to quaternary structure, homodimer.

The protein localises to the cytoplasm. It catalyses the reaction tRNA(Asn) + L-asparagine + ATP = L-asparaginyl-tRNA(Asn) + AMP + diphosphate + H(+). This is Asparagine--tRNA ligase from Mycoplasma genitalium (strain ATCC 33530 / DSM 19775 / NCTC 10195 / G37) (Mycoplasmoides genitalium).